The primary structure comprises 476 residues: Transcription factor HBP-1b(c1) (476 aa).

Disordered regions lie at residues glutamate 1–proline 29, histidine 133–aspartate 159, and glutamine 171–arginine 207. A compositionally biased stretch (low complexity) spans alanine 10 to glycine 25. Polar residues predominate over residues asparagine 135–alanine 144. The segment covering serine 180–lysine 191 has biased composition (basic and acidic residues). The bZIP domain occupies aspartate 189–serine 252. A basic motif region spans residues lysine 191 to lysine 211. Positions glutamate 201–serine 242 form a coiled coil. The leucine-zipper stretch occupies residues leucine 217–leucine 231. One can recognise a DOG1 domain in the interval alanine 256–arginine 473.

The protein belongs to the bZIP family. As to quaternary structure, binds DNA as a dimer.

It is found in the nucleus. Functionally, transcriptional activator that binds specifically to the DNA sequence 5'-TGACG-3'. Recognizes ocs elements like the as-1 motif of the cauliflower mosaic virus 35S promoter. Binding to the as-1-like cis elements mediate auxin- and salicylic acid-inducible transcription. Binds to the hexamer motif 5'-ACGTCA-3' of histone gene promoters. The protein is Transcription factor HBP-1b(c1) of Triticum aestivum (Wheat).